The following is a 466-amino-acid chain: ATP synthase subunit beta (466 aa).

Position 155–162 (155–162 (GGAGVGKT)) interacts with ATP.

This sequence belongs to the ATPase alpha/beta chains family. In terms of assembly, F-type ATPases have 2 components, CF(1) - the catalytic core - and CF(0) - the membrane proton channel. CF(1) has five subunits: alpha(3), beta(3), gamma(1), delta(1), epsilon(1). CF(0) has three main subunits: a(1), b(2) and c(9-12). The alpha and beta chains form an alternating ring which encloses part of the gamma chain. CF(1) is attached to CF(0) by a central stalk formed by the gamma and epsilon chains, while a peripheral stalk is formed by the delta and b chains.

It localises to the cell inner membrane. The catalysed reaction is ATP + H2O + 4 H(+)(in) = ADP + phosphate + 5 H(+)(out). Functionally, produces ATP from ADP in the presence of a proton gradient across the membrane. The catalytic sites are hosted primarily by the beta subunits. The protein is ATP synthase subunit beta of Bordetella avium (strain 197N).